A 301-amino-acid chain; its full sequence is Probable alpha-L-glutamate ligase (301 aa).

One can recognise an ATP-grasp domain in the interval 104–287 (LQLLSRRGIG…VAGIIIEHLE (184 aa)). Residues lysine 141, 178 to 179 (EY), aspartate 187, and 211 to 213 (RSN) contribute to the ATP site. Mg(2+) is bound by residues aspartate 248, glutamate 260, and asparagine 262. Mn(2+) is bound by residues aspartate 248, glutamate 260, and asparagine 262.

Belongs to the RimK family. It depends on Mg(2+) as a cofactor. Mn(2+) is required as a cofactor.

In Pseudomonas fluorescens (strain Pf0-1), this protein is Probable alpha-L-glutamate ligase.